The following is a 90-amino-acid chain: MKTLPLVLAVVAFVYLDLAHTLKCRSGNVCILGDDCSEGENVCFQRKNGTGVFGMRVVRGCAASCPSPIGGEEVSCCSTDNCNNSFSRFF.

Residues 1–21 (MKTLPLVLAVVAFVYLDLAHT) form the signal peptide. 4 disulfides stabilise this stretch: Cys24-Cys43, Cys36-Cys61, Cys65-Cys76, and Cys77-Cys82.

The protein belongs to the three-finger toxin family. Ancestral subfamily. As to expression, expressed by the venom gland.

Its subcellular location is the secreted. This is Toxin 3FTx-Psa1 from Psammophis mossambicus (Olive sand snake).